The sequence spans 274 residues: Large ribosomal subunit protein uL2 (274 aa).

Residues 221–274 form a disordered region; the sequence is RGTAMNPVDHPHGGGEGRNFGKHPVTPWGVQTKGKKTRNNKRTDKSIVRRRSKK.

The protein belongs to the universal ribosomal protein uL2 family. Part of the 50S ribosomal subunit. Forms a bridge to the 30S subunit in the 70S ribosome.

Its function is as follows. One of the primary rRNA binding proteins. Required for association of the 30S and 50S subunits to form the 70S ribosome, for tRNA binding and peptide bond formation. It has been suggested to have peptidyltransferase activity; this is somewhat controversial. Makes several contacts with the 16S rRNA in the 70S ribosome. This chain is Large ribosomal subunit protein uL2, found in Hamiltonella defensa subsp. Acyrthosiphon pisum (strain 5AT).